Consider the following 187-residue polypeptide: MAQPTPHAGLQEGLIHEPASEHGGGFPPFQSTTFAAQILWLAIAFGLLYYLMSRVAVPRIAGLLHDRQARLAADLDEASRMKTGADSARGAYERSLKEAQDKAKGIAQATRDSLAAEAETRRKALEADLAAKLAESEAQIRARTATAMGSVREVAADAATAIVERLIGQSPDRAAVEAAYDRTQTVH.

The helical transmembrane segment at 32-52 threads the bilayer; that stretch reads TTFAAQILWLAIAFGLLYYLM.

This sequence belongs to the ATPase B chain family. As to quaternary structure, F-type ATPases have 2 components, F(1) - the catalytic core - and F(0) - the membrane proton channel. F(1) has five subunits: alpha(3), beta(3), gamma(1), delta(1), epsilon(1). F(0) has three main subunits: a(1), b(2) and c(10-14). The alpha and beta chains form an alternating ring which encloses part of the gamma chain. F(1) is attached to F(0) by a central stalk formed by the gamma and epsilon chains, while a peripheral stalk is formed by the delta and b chains.

The protein resides in the cell inner membrane. Its function is as follows. F(1)F(0) ATP synthase produces ATP from ADP in the presence of a proton or sodium gradient. F-type ATPases consist of two structural domains, F(1) containing the extramembraneous catalytic core and F(0) containing the membrane proton channel, linked together by a central stalk and a peripheral stalk. During catalysis, ATP synthesis in the catalytic domain of F(1) is coupled via a rotary mechanism of the central stalk subunits to proton translocation. Functionally, component of the F(0) channel, it forms part of the peripheral stalk, linking F(1) to F(0). The b'-subunit is a diverged and duplicated form of b found in plants and photosynthetic bacteria. In Methylobacterium sp. (strain 4-46), this protein is ATP synthase subunit b 2 (atpF2).